We begin with the raw amino-acid sequence, 282 residues long: tRNA pseudouridine synthase B (282 aa).

D39 functions as the Nucleophile in the catalytic mechanism.

Belongs to the pseudouridine synthase TruB family. Type 1 subfamily.

It catalyses the reaction uridine(55) in tRNA = pseudouridine(55) in tRNA. In terms of biological role, responsible for synthesis of pseudouridine from uracil-55 in the psi GC loop of transfer RNAs. The sequence is that of tRNA pseudouridine synthase B from Borreliella afzelii (strain PKo) (Borrelia afzelii).